A 200-amino-acid polypeptide reads, in one-letter code: HTH-type transcriptional regulator Hpr (200 aa).

The 145-residue stretch at 13-157 (AMLFSQRIAQ…MMCIVRNIYG (145 aa)) folds into the HTH marR-type domain. Residues 63–86 (ISEIAKFGVMHVSTAFNFSKKLEE) constitute a DNA-binding region (H-T-H motif).

As to quaternary structure, homodimer.

Its function is as follows. Negative regulator of protease production and sporulation. The chain is HTH-type transcriptional regulator Hpr from Geobacillus thermodenitrificans (strain NG80-2).